The sequence spans 177 residues: Insertion element IS1223 uncharacterized 20.7 kDa protein (177 aa).

Residues 112–131 (KQKGRPRKVPKKSKKTTKKL) form a disordered region. Basic residues predominate over residues 113-128 (QKGRPRKVPKKSKKTT).

Belongs to the IS150/IS1296 orfA family.

This chain is Insertion element IS1223 uncharacterized 20.7 kDa protein, found in Lactobacillus johnsonii.